The following is a 516-amino-acid chain: Citrate synthase, glyoxysomal (516 aa).

A glyoxysome-targeting transit peptide spans 1–43; it reads MPTDMELSPSNVARHRLAVLAAHLSAASLEPPVMASSLEAHCV. Residues H329, H368, and D424 contribute to the active site.

It belongs to the citrate synthase family.

It is found in the glyoxysome. It carries out the reaction oxaloacetate + acetyl-CoA + H2O = citrate + CoA + H(+). It functions in the pathway carbohydrate metabolism; glyoxylate cycle; isocitrate from oxaloacetate: step 1/2. This is Citrate synthase, glyoxysomal from Cucurbita maxima (Pumpkin).